The following is a 471-amino-acid chain: Alkaline phosphatase (471 aa).

The first 21 residues, 1-21 (MKQSTIALALLPLLFTPVTKA), serve as a signal peptide directing secretion. D73 is a binding site for Mg(2+). Position 73 (D73) interacts with Zn(2+). The active-site Phosphoserine intermediate is the S124. Positions 175 and 177 each coordinate Mg(2+). Cystine bridges form between C190/C200 and C308/C358. E344 provides a ligand contact to Mg(2+). Zn(2+) contacts are provided by D349, H353, D391, H392, and H434.

This sequence belongs to the alkaline phosphatase family. As to quaternary structure, isozymes 1 and 3 are a dimer of identical chains, isozyme 2 is a dimer of heterogeneous chains, one of each of the subunits from isozymes 1 and 3. The cofactor is Mg(2+). Zn(2+) serves as cofactor.

It localises to the periplasm. The enzyme catalyses a phosphate monoester + H2O = an alcohol + phosphate. In Escherichia coli (strain K12), this protein is Alkaline phosphatase (phoA).